We begin with the raw amino-acid sequence, 650 residues long: 1-deoxy-D-xylulose-5-phosphate synthase (650 aa).

Residues H87 and 128-130 each bind thiamine diphosphate; that span reads GHS. Mg(2+) is bound at residue D159. Thiamine diphosphate-binding positions include 160–161, N188, Y299, and E383; that span reads GS. N188 is a Mg(2+) binding site.

It belongs to the transketolase family. DXPS subfamily. In terms of assembly, homodimer. It depends on Mg(2+) as a cofactor. The cofactor is thiamine diphosphate.

The enzyme catalyses D-glyceraldehyde 3-phosphate + pyruvate + H(+) = 1-deoxy-D-xylulose 5-phosphate + CO2. The protein operates within metabolic intermediate biosynthesis; 1-deoxy-D-xylulose 5-phosphate biosynthesis; 1-deoxy-D-xylulose 5-phosphate from D-glyceraldehyde 3-phosphate and pyruvate: step 1/1. In terms of biological role, catalyzes the acyloin condensation reaction between C atoms 2 and 3 of pyruvate and glyceraldehyde 3-phosphate to yield 1-deoxy-D-xylulose-5-phosphate (DXP). The protein is 1-deoxy-D-xylulose-5-phosphate synthase of Syntrophus aciditrophicus (strain SB).